The chain runs to 156 residues: Small ribosomal subunit protein uS7 (156 aa).

Belongs to the universal ribosomal protein uS7 family. As to quaternary structure, part of the 30S ribosomal subunit. Contacts proteins S9 and S11.

In terms of biological role, one of the primary rRNA binding proteins, it binds directly to 16S rRNA where it nucleates assembly of the head domain of the 30S subunit. Is located at the subunit interface close to the decoding center, probably blocks exit of the E-site tRNA. The polypeptide is Small ribosomal subunit protein uS7 (Lactobacillus acidophilus (strain ATCC 700396 / NCK56 / N2 / NCFM)).